A 344-amino-acid polypeptide reads, in one-letter code: GTPase Obg (344 aa).

One can recognise an Obg domain in the interval 1–159 (MKFLDEAKVY…MWLILRLKLI (159 aa)). Residues 160–327 (ADAGLVGLPN…ALRAIQAQLD (168 aa)) enclose the OBG-type G domain. GTP contacts are provided by residues 166–173 (GLPNAGKS), 191–195 (FTTLH), 212–215 (DIPG), 279–282 (SKAD), and 308–310 (SAA). 2 residues coordinate Mg(2+): Ser173 and Thr193.

The protein belongs to the TRAFAC class OBG-HflX-like GTPase superfamily. OBG GTPase family. In terms of assembly, monomer. Mg(2+) serves as cofactor.

The protein resides in the cytoplasm. Its function is as follows. An essential GTPase which binds GTP, GDP and possibly (p)ppGpp with moderate affinity, with high nucleotide exchange rates and a fairly low GTP hydrolysis rate. Plays a role in control of the cell cycle, stress response, ribosome biogenesis and in those bacteria that undergo differentiation, in morphogenesis control. This is GTPase Obg from Methylorubrum populi (strain ATCC BAA-705 / NCIMB 13946 / BJ001) (Methylobacterium populi).